The following is a 545-amino-acid chain: Monocarboxylate transporter 8 (545 aa).

A disordered region spans residues 1–98; sequence MALPSPASEE…VETRGTARGF (98 aa). N-acetylalanine is present on Ala2. Residues 2 to 102 lie on the Cytoplasmic side of the membrane; it reads ALPSPASEEA…GTARGFQPPE (101 aa). 2 repeat units span residues 29 to 50 and 51 to 72. Residues 29-72 form a 2 X 22 AA approximate tandem repeats region; sequence PVPEPEPEPEPEPEPEPEPVPVPPPEPQPEPEPQPLPDPAPLPV. Residues 33–45 are compositionally biased toward acidic residues; the sequence is PEPEPEPEPEPEP. The span at 46–70 shows a compositional bias: pro residues; that stretch reads EPVPVPPPEPQPEPEPQPLPDPAPL. A helical membrane pass occupies residues 103 to 123; it reads GGFGWIVVFAATWCNGSIFGI. Topologically, residues 124-149 are extracellular; the sequence is HNSVGILYSMLLEEEKEKNRQVEFQA. The chain crosses the membrane as a helical span at residues 150 to 170; that stretch reads AWVGALAMGMIFFCSPIVSIF. The Cytoplasmic portion of the chain corresponds to 171–181; that stretch reads TDRLGCRITAT. A helical membrane pass occupies residues 182 to 202; it reads TGAAVAFIGLHTSSFTSSLSL. Residues 203–204 lie on the Extracellular side of the membrane; sequence RY. Residues 205–225 traverse the membrane as a helical segment; that stretch reads FTYGILFGCGCSFAFQPSLVI. The Cytoplasmic segment spans residues 226–235; that stretch reads LGHYFQRRLG. Residues 236–256 form a helical membrane-spanning segment; the sequence is LANGVVSAGSSIFSMSFPFLI. Residues 257–264 lie on the Extracellular side of the membrane; it reads KMLGDRIK. The chain crosses the membrane as a helical span at residues 265–285; the sequence is LAQTFQVLSTFMFVLTLLSLT. Over 286–328 the chain is Cytoplasmic; it reads YRPLLPSSQDTPSKRGAHTLRQRFLVQFRKYFNMRVFRQRTYR. The helical transmembrane segment at 329-349 threads the bilayer; the sequence is IWAFGIAAAALGYFVPYVHLM. Residues 350–362 lie on the Extracellular side of the membrane; it reads KYVEDKFKEIKET. Residues 363-383 traverse the membrane as a helical segment; sequence WVLLVCIGATSGLGRLVSGHI. At 384–392 the chain is on the cytoplasmic side; that stretch reads SDSIPGLKK. Residues 393–413 traverse the membrane as a helical segment; the sequence is IYLQVLSFLLLGLMSMMIPLC. At 414–415 the chain is on the extracellular side; sequence RD. The helical transmembrane segment at 416-436 threads the bilayer; that stretch reads FGGLIVVCLFLGLCDGFFITI. The Cytoplasmic segment spans residues 437–453; that stretch reads MAPIAFELVGPMQASQA. A helical transmembrane segment spans residues 454–474; it reads IGYLLGMMALPMIAGPPIAGL. Topologically, residues 475–483 are extracellular; that stretch reads LRNCFGNYH. A helical transmembrane segment spans residues 484–504; that stretch reads VAFYFAGVPPIIGAVILFFVP. At 505–545 the chain is on the cytoplasmic side; the sequence is LMHQRMFKKEQRESSKDKMLSHDPDPNGELLPGSPTPEEPI. The span at 514-529 shows a compositional bias: basic and acidic residues; sequence EQRESSKDKMLSHDPD. Residues 514 to 545 form a disordered region; the sequence is EQRESSKDKMLSHDPDPNGELLPGSPTPEEPI. A Phosphothreonine modification is found at Thr540.

Belongs to the major facilitator superfamily. Monocarboxylate porter (TC 2.A.1.13) family. In terms of assembly, monomer. Homodimer. Homooligomer. In terms of tissue distribution, expressed at highest levels in liver, lower levels in brain, kidney and heart (at protein level). Expressed in microvessels of the blood-brain barrier (BBB) (at protein level).

Its subcellular location is the cell membrane. The protein localises to the apical cell membrane. It catalyses the reaction 3,3',5-triiodo-L-thyronine(out) = 3,3',5-triiodo-L-thyronine(in). The catalysed reaction is 3,3',5'-triiodo-L-thyronine(out) = 3,3',5'-triiodo-L-thyronine(in). It carries out the reaction L-thyroxine(out) = L-thyroxine(in). The enzyme catalyses 3,3'-diiodo-L-thyronine(out) = 3,3'-diiodo-L-thyronine(in). Specific thyroid hormone transmembrane transporter, that mediates both uptake and efflux of thyroid hormone across the cell membrane independently of pH or a Na(+) gradient. Major substrates are the iodothyronines T3 and T4 and to a lesser extent rT3 and 3,3-diiodothyronine (3,3'-T2). Acts as an important mediator of thyroid hormone transport, especially T3, through the blood-brain barrier. This Rattus norvegicus (Rat) protein is Monocarboxylate transporter 8 (SLC16A2).